The sequence spans 197 residues: Non-structural protein 5 (197 aa).

The span at 17–30 (IFKNESSSTTSTLS) shows a compositional bias: low complexity. The disordered stretch occupies residues 17–36 (IFKNESSSTTSTLSGKSIGR). D92 contacts Mg(2+).

The protein belongs to the rotavirus NSP5 family. In terms of assembly, homodimer. Interacts with VP1. Interacts with VP2. Interacts with NSP2; this interaction leads to up-regulation of NSP5 hyperphosphorylation and formation of virus factories. Interacts with NSP6. Participates in the selective exclusion of host proteins from stress granules (SG) and P bodies (PB). Also participates in the sequestration of these remodeled organelles in viral factories. It depends on Mg(2+) as a cofactor. Post-translationally, O-glycosylated.

The protein resides in the host cytoplasm. Plays an essential role in the viral genome replication. Participates, together with NSP2, in the formation of viral factories (viroplasms), which are large inclusions in the host cytoplasm where replication intermediates are assembled and viral RNA replication takes place. Orchestrates the recruitment of viroplasmic proteins such as capsid proteins to these factories. Participates in the selective exclusion of host proteins from stress granules (SG) and P bodies (PB). Also participates in the sequestration of these remodeled organelles in viral factories. The protein is Non-structural protein 5 of Homo sapiens (Human).